The following is a 415-amino-acid chain: Enolase (415 aa).

Glutamine 161 provides a ligand contact to (2R)-2-phosphoglycerate. Glutamate 203 serves as the catalytic Proton donor. Mg(2+)-binding residues include aspartate 240, glutamate 281, and aspartate 308. (2R)-2-phosphoglycerate-binding residues include lysine 333, arginine 362, serine 363, and lysine 384. Lysine 333 functions as the Proton acceptor in the catalytic mechanism.

This sequence belongs to the enolase family. Mg(2+) is required as a cofactor.

It localises to the cytoplasm. The protein resides in the secreted. Its subcellular location is the cell surface. The enzyme catalyses (2R)-2-phosphoglycerate = phosphoenolpyruvate + H2O. It participates in carbohydrate degradation; glycolysis; pyruvate from D-glyceraldehyde 3-phosphate: step 4/5. In terms of biological role, catalyzes the reversible conversion of 2-phosphoglycerate (2-PG) into phosphoenolpyruvate (PEP). It is essential for the degradation of carbohydrates via glycolysis. This is Enolase from Campylobacter hominis (strain ATCC BAA-381 / DSM 21671 / CCUG 45161 / LMG 19568 / NCTC 13146 / CH001A).